Here is a 932-residue protein sequence, read N- to C-terminus: uncharacterized protein (932 aa).

Disordered stretches follow at residues 26-120, 158-289, 304-617, 635-720, and 802-863; these read NINN…NMLT, MGIG…EEKK, NNNN…INHD, QQSQ…PPLV, and SVSS…FPLE. Composition is skewed to low complexity over residues 41–105 and 163–241; these read NNNI…IISS and NNNN…YGNN. The segment covering 242-253 has biased composition (polar residues); that stretch reads TPVNYIHNNSTP. Over residues 265 to 285 the composition is skewed to acidic residues; that stretch reads SDEEDSVLYSSDDSEESDYEE. Residues 304-475 are compositionally biased toward low complexity; the sequence is NNNNINNNNM…NNNNNNNNNN (172 aa). 2 stretches are compositionally biased toward polar residues: residues 476–492 and 527–540; these read ENYV…NTES and DIPN…TKQQ. Residues 548–590 show a composition bias toward low complexity; it reads SPVYSPPNNLSPLSSPYLHHNSNNNSNNGGGNSNNNNTNFNYG. Over residues 606–617 the composition is skewed to basic and acidic residues; that stretch reads GERDPPHVINHD. Low complexity-rich tracts occupy residues 635-666, 696-707, and 813-853; these read QQSQ…PSSS, SPPNTSISSLSS, and NSSN…NNNS. Over residues 854–863 the composition is skewed to basic and acidic residues; that stretch reads EPKKPKFPLE.

This is an uncharacterized protein from Dictyostelium discoideum (Social amoeba).